The sequence spans 27 residues: Pregnancy-associated glycoprotein 55 (27 aa).

It belongs to the peptidase A1 family. Glycosylated. Placenta.

The protein is Pregnancy-associated glycoprotein 55 (PAG55) of Capra hircus (Goat).